We begin with the raw amino-acid sequence, 376 residues long: Erythronate-4-phosphate dehydrogenase (376 aa).

Substrate-binding residues include Ser45 and Thr67. Asp147 is a binding site for NAD(+). Residue Arg209 is part of the active site. NAD(+) is bound at residue Asp233. Glu238 is a catalytic residue. His255 serves as the catalytic Proton donor. Position 258 (Gly258) interacts with NAD(+). Residue Tyr259 participates in substrate binding.

The protein belongs to the D-isomer specific 2-hydroxyacid dehydrogenase family. PdxB subfamily. In terms of assembly, homodimer.

The protein resides in the cytoplasm. The enzyme catalyses 4-phospho-D-erythronate + NAD(+) = (R)-3-hydroxy-2-oxo-4-phosphooxybutanoate + NADH + H(+). Its pathway is cofactor biosynthesis; pyridoxine 5'-phosphate biosynthesis; pyridoxine 5'-phosphate from D-erythrose 4-phosphate: step 2/5. Catalyzes the oxidation of erythronate-4-phosphate to 3-hydroxy-2-oxo-4-phosphonooxybutanoate. The sequence is that of Erythronate-4-phosphate dehydrogenase from Shewanella oneidensis (strain ATCC 700550 / JCM 31522 / CIP 106686 / LMG 19005 / NCIMB 14063 / MR-1).